The primary structure comprises 89 residues: Small ribosomal subunit protein uS15 (89 aa).

It belongs to the universal ribosomal protein uS15 family. Part of the 30S ribosomal subunit. Forms a bridge to the 50S subunit in the 70S ribosome, contacting the 23S rRNA.

In terms of biological role, one of the primary rRNA binding proteins, it binds directly to 16S rRNA where it helps nucleate assembly of the platform of the 30S subunit by binding and bridging several RNA helices of the 16S rRNA. Forms an intersubunit bridge (bridge B4) with the 23S rRNA of the 50S subunit in the ribosome. The sequence is that of Small ribosomal subunit protein uS15 from Sulfurovum sp. (strain NBC37-1).